Consider the following 176-residue polypeptide: Protein SPMIP1 (176 aa).

The segment at threonine 55–proline 80 is disordered. The segment covering proline 61 to proline 80 has biased composition (pro residues).

This chain is Protein SPMIP1, found in Homo sapiens (Human).